Reading from the N-terminus, the 459-residue chain is Chromosomal replication initiator protein DnaA (459 aa).

Residues 1 to 74 (MQKIETFWYF…DEMAQGHFNE (74 aa)) form a domain I, interacts with DnaA modulators region. The interval 74-122 (EKIHFKLELKDPAEIKTATIKAPEPKSKEDKKPPTDKAHGTTARKTNPS) is domain II. Residues 91-123 (ATIKAPEPKSKEDKKPPTDKAHGTTARKTNPSR) form a disordered region. Over residues 96–112 (PEPKSKEDKKPPTDKAH) the composition is skewed to basic and acidic residues. The domain III, AAA+ region stretch occupies residues 123 to 339 (RLNPAFTFDA…GALKRVLAYS (217 aa)). ATP contacts are provided by Gly-167, Gly-169, Lys-170, and Thr-171. Residues 340–459 (RFTGHPISLD…YSTLIHILRG (120 aa)) are domain IV, binds dsDNA.

It belongs to the DnaA family. In terms of assembly, oligomerizes as a right-handed, spiral filament on DNA at oriC.

The protein localises to the cytoplasm. Functionally, plays an essential role in the initiation and regulation of chromosomal replication. ATP-DnaA binds to the origin of replication (oriC) to initiate formation of the DNA replication initiation complex once per cell cycle. Binds the DnaA box (a 9 base pair repeat at the origin) and separates the double-stranded (ds)DNA. Forms a right-handed helical filament on oriC DNA; dsDNA binds to the exterior of the filament while single-stranded (ss)DNA is stabiized in the filament's interior. The ATP-DnaA-oriC complex binds and stabilizes one strand of the AT-rich DNA unwinding element (DUE), permitting loading of DNA polymerase. After initiation quickly degrades to an ADP-DnaA complex that is not apt for DNA replication. Binds acidic phospholipids. The chain is Chromosomal replication initiator protein DnaA from Nitrosomonas eutropha (strain DSM 101675 / C91 / Nm57).